The chain runs to 115 residues: U3-lycotoxin-Ls1k (115 aa).

An N-terminal signal peptide occupies residues 1–20 (MKFVLLFGVLLVTLFSYSSA). A propeptide spanning residues 21–44 (EMLDDFDQADEDELLSLIEKEEAR) is cleaved from the precursor. 4 disulfide bridges follow: C48–C63, C55–C72, C62–C87, and C74–C85.

It belongs to the neurotoxin 19 (CSTX) family. 01 subfamily. In terms of tissue distribution, expressed by the venom gland.

Its subcellular location is the secreted. The chain is U3-lycotoxin-Ls1k from Lycosa singoriensis (Wolf spider).